Consider the following 465-residue polypeptide: Phenylalanine--tRNA ligase alpha subunit (465 aa).

Residues Thr-311 and Phe-389 each contribute to the L-phenylalanine site. Glu-391 lines the Mg(2+) pocket.

The protein belongs to the class-II aminoacyl-tRNA synthetase family. Phe-tRNA synthetase alpha subunit type 2 subfamily. In terms of assembly, tetramer of two alpha and two beta subunits. Requires Mg(2+) as cofactor.

The protein localises to the cytoplasm. It carries out the reaction tRNA(Phe) + L-phenylalanine + ATP = L-phenylalanyl-tRNA(Phe) + AMP + diphosphate + H(+). The polypeptide is Phenylalanine--tRNA ligase alpha subunit (Metallosphaera sedula (strain ATCC 51363 / DSM 5348 / JCM 9185 / NBRC 15509 / TH2)).